The sequence spans 273 residues: Ribosomal RNA small subunit methyltransferase A (273 aa).

Residues asparagine 18, leucine 20, glycine 45, glutamate 66, aspartate 91, and asparagine 113 each contribute to the S-adenosyl-L-methionine site.

This sequence belongs to the class I-like SAM-binding methyltransferase superfamily. rRNA adenine N(6)-methyltransferase family. RsmA subfamily.

It is found in the cytoplasm. The enzyme catalyses adenosine(1518)/adenosine(1519) in 16S rRNA + 4 S-adenosyl-L-methionine = N(6)-dimethyladenosine(1518)/N(6)-dimethyladenosine(1519) in 16S rRNA + 4 S-adenosyl-L-homocysteine + 4 H(+). Functionally, specifically dimethylates two adjacent adenosines (A1518 and A1519) in the loop of a conserved hairpin near the 3'-end of 16S rRNA in the 30S particle. May play a critical role in biogenesis of 30S subunits. The polypeptide is Ribosomal RNA small subunit methyltransferase A (Klebsiella pneumoniae subsp. pneumoniae (strain ATCC 700721 / MGH 78578)).